The chain runs to 715 residues: SEC14-like protein 1 (715 aa).

The PRELI/MSF1 domain maps to 1–175 (MVQKYQSPVR…YLRQLEEEGI (175 aa)). The segment at 1–510 (MVQKYQSPVR…VPKSLYRTAE (510 aa)) is required for interaction and inhibitory function toward RIGI. Phosphothreonine is present on threonine 234. The CRAL-TRIO domain maps to 319–495 (PPQVLQDYYA…FLSGECMCEV (177 aa)). Positions 521-674 (TETIYQSASV…KCKVMYYTEV (154 aa)) constitute a GOLD domain. At serine 586 the chain carries Phosphoserine.

In terms of assembly, interacts with RIGI (via tandem CARD domain); the interaction is direct. Interacts (via GOLD domain) with SLC18A3; the interaction is direct. Interacts with SLC5A7 (via GOLD domain); the interaction is direct. Ubiquitous.

It is found in the cytoplasm. Its subcellular location is the golgi apparatus. In terms of biological role, may play a role in innate immunity by inhibiting the antiviral RIG-I signaling pathway. In this pathway, functions as a negative regulator of RIGI, the cytoplasmic sensor of viral nucleic acids. Prevents the interaction of RIGI with MAVS/IPS1, an important step in signal propagation. May also regulate the SLC18A3 and SLC5A7 cholinergic transporters. The chain is SEC14-like protein 1 (SEC14L1) from Homo sapiens (Human).